The sequence spans 1366 residues: Agglutinin-like protein 6 (1366 aa).

The first 18 residues, 1–18, serve as a signal peptide directing secretion; sequence MKTVILLHLFFYCTIAMA. 4 cysteine pairs are disulfide-bonded: Cys-74–Cys-151, Cys-97–Cys-113, Cys-206–Cys-301, and Cys-228–Cys-257. Asn-294 carries N-linked (GlcNAc...) asparagine glycosylation. ALS repeat units lie at residues 368–399, 404–435, 441–472, 477–508, 513–544, and 549–580; these read TTIT…VDVP, TTIT…VQVP, VTTT…IKEP, VTTT…VREP, and VTTT…IHDP. Residues 449 to 470 are disordered; it reads GSVPTTETVTTGPQGTDSVIIK. A compositionally biased stretch (low complexity) spans 451-464; that stretch reads VPTTETVTTGPQGT. Disordered regions lie at residues 583 to 658, 758 to 780, and 804 to 833; these read ESSS…TSES, LSSD…FPHT, and VSLT…SDQS. Asn-596 carries N-linked (GlcNAc...) asparagine glycosylation. 2 stretches are compositionally biased toward low complexity: residues 758 to 775 and 805 to 833; these read LSSD…SPSD and SLTS…SDQS. Residue Asn-866 is glycosylated (N-linked (GlcNAc...) asparagine). Disordered regions lie at residues 874-915, 928-976, 996-1040, 1081-1130, and 1158-1218; these read ESES…STVT, TGMP…TSAS, SETS…KESS, EDNE…VSSV, and ETSL…STNN. Composition is skewed to low complexity over residues 875-889, 898-915, and 940-958; these read SESS…ASES, SEST…STVT, and TSDV…PTSA. Residues 959–969 are compositionally biased toward polar residues; sequence EQSITDNPNID. Residues 996–1021 are compositionally biased toward low complexity; the sequence is SETSTLSSDDSTSSDTSISSTTNSDT. Polar residues-rich tracts occupy residues 1022–1040 and 1085–1107; these read GNIN…KESS and PNTF…SVLS. Composition is skewed to low complexity over residues 1121–1130 and 1158–1177; these read VTDTTTVSSV and ETSL…SSGT. Polar residues-rich tracts occupy residues 1192-1202 and 1209-1218; these read TSTDNRLSYST and TYANSGSTNN. Asn-1273 carries N-linked (GlcNAc...) asparagine glycosylation. Ser-1345 is lipidated: GPI-anchor amidated serine. Residues 1346–1366 constitute a propeptide, removed in mature form; that stretch reads SATKHPSWLLKFISVALFFFL.

Belongs to the ALS family. In terms of processing, the GPI-anchor is attached to the protein in the endoplasmic reticulum and serves to target the protein to the cell surface. There, the glucosamine-inositol phospholipid moiety is cleaved off and the GPI-modified mannoprotein is covalently attached via its lipidless GPI glycan remnant to the 1,6-beta-glucan of the outer cell wall layer.

The protein resides in the cell membrane. It localises to the secreted. It is found in the cell wall. In terms of biological role, cell surface adhesion protein which mediates both yeast-to-host tissue adherence and yeast aggregation. Plays an important role in the pathogenesis of C.albicans infections. This chain is Agglutinin-like protein 6 (ALS6), found in Candida albicans (strain SC5314 / ATCC MYA-2876) (Yeast).